The following is a 722-amino-acid chain: Glycine--tRNA ligase beta subunit (722 aa).

The protein belongs to the class-II aminoacyl-tRNA synthetase family. Tetramer of two alpha and two beta subunits.

It localises to the cytoplasm. The enzyme catalyses tRNA(Gly) + glycine + ATP = glycyl-tRNA(Gly) + AMP + diphosphate. The chain is Glycine--tRNA ligase beta subunit (glyS) from Xylella fastidiosa (strain 9a5c).